A 151-amino-acid polypeptide reads, in one-letter code: UPF0178 protein Pfl01_5469 (151 aa).

The protein belongs to the UPF0178 family.

This is UPF0178 protein Pfl01_5469 from Pseudomonas fluorescens (strain Pf0-1).